The primary structure comprises 297 residues: Taste receptor type 2 member 4 (297 aa).

Residues 1 to 11 (MLWELYVFVFA) are Extracellular-facing. The helical transmembrane segment at 12-32 (ASVFLNFVGIIANLFIIVIII) threads the bilayer. The Cytoplasmic segment spans residues 33–46 (KTWVNSRRIASPDR). A helical membrane pass occupies residues 47-67 (ILFSLAITRFLTLGLFLLNSV). At 68–80 (YIATNTGRSVYFS) the chain is on the extracellular side. A helical membrane pass occupies residues 81–101 (TFFLLCWKFLDANSLWLVTIL). Residues 102–128 (NSLYCVKITNFQHPVFLLLKRTISMKT) lie on the Cytoplasmic side of the membrane. The chain crosses the membrane as a helical span at residues 129–149 (TSLLLACLLISALTTLLYYML). Residues 150–171 (SQISRFPEHIIGRNDTSFDLSD) lie on the Extracellular side of the membrane. N-linked (GlcNAc...) asparagine glycosylation occurs at Asn163. The helical transmembrane segment at 172–192 (GILTLVASLVLNSLLQFMLNV) threads the bilayer. Over 193–229 (TFASLLIHSLRRHIQKMQRNRTSFWNPQTEAHMGAMR) the chain is Cytoplasmic. The helical transmembrane segment at 230-250 (LMICFLVLYIPYSIATLLYLP) threads the bilayer. The Extracellular segment spans residues 251–260 (SYMRKNLRAQ). Residues 261–281 (AICMIITAAYPPGHSVLLIIT) traverse the membrane as a helical segment. The Cytoplasmic segment spans residues 282 to 297 (HHKLKAKAKKIFCFYK).

It belongs to the G-protein coupled receptor T2R family. As to expression, expressed in subsets of taste receptor cells of the tongue and palate epithelium and exclusively in gustducin-positive cells. Expressed in 15% taste bud cells in circumvallate and foliate papillae but only in 2% in fungiform papillae.

The protein localises to the membrane. It localises to the cell projection. It is found in the cilium membrane. Its function is as follows. Gustducin-coupled receptor for denatonium and N(6)-propyl-2-thiouracil implicated in the perception of bitter compounds in the oral cavity and the gastrointestinal tract. Signals through PLCB2 and the calcium-regulated cation channel TRPM5. In airway epithelial cells, binding of denatonium increases the intracellular calcium ion concentration and stimulates ciliary beat frequency. The chain is Taste receptor type 2 member 4 (Tas2r4) from Mus musculus (Mouse).